A 356-amino-acid polypeptide reads, in one-letter code: Uroporphyrinogen decarboxylase (356 aa).

Substrate contacts are provided by residues 27-31 (RQAGR), aspartate 77, tyrosine 154, serine 209, and histidine 327.

The protein belongs to the uroporphyrinogen decarboxylase family. As to quaternary structure, homodimer.

The protein resides in the cytoplasm. It catalyses the reaction uroporphyrinogen III + 4 H(+) = coproporphyrinogen III + 4 CO2. It participates in porphyrin-containing compound metabolism; protoporphyrin-IX biosynthesis; coproporphyrinogen-III from 5-aminolevulinate: step 4/4. Its function is as follows. Catalyzes the decarboxylation of four acetate groups of uroporphyrinogen-III to yield coproporphyrinogen-III. The sequence is that of Uroporphyrinogen decarboxylase from Aromatoleum aromaticum (strain DSM 19018 / LMG 30748 / EbN1) (Azoarcus sp. (strain EbN1)).